The sequence spans 109 residues: Phosphoribosyl-ATP pyrophosphatase (109 aa).

It belongs to the PRA-PH family.

The protein localises to the cytoplasm. It carries out the reaction 1-(5-phospho-beta-D-ribosyl)-ATP + H2O = 1-(5-phospho-beta-D-ribosyl)-5'-AMP + diphosphate + H(+). It functions in the pathway amino-acid biosynthesis; L-histidine biosynthesis; L-histidine from 5-phospho-alpha-D-ribose 1-diphosphate: step 2/9. The protein is Phosphoribosyl-ATP pyrophosphatase of Sphingopyxis alaskensis (strain DSM 13593 / LMG 18877 / RB2256) (Sphingomonas alaskensis).